The sequence spans 357 residues: MVRLTLDLIARNSNLKPRKEETISQCLKKITHINFSDKNIDAIEDLSLCKNLSVLYLYDNCISQITNLNYATNLTHLYLQNNCIPCIENLRSLKKLEKLYLGGNYIAVIEGLEGLGELRELHVENQRLPLGEKLLFDPRTLHSLAKSLSILNISNNNIDDIRDLEILENLNQLIAVDNQLLHVKDLEFLLNKLMKLWKIDLNGNPVCLKPKYRDRLILVSKSLEFLDGKEIKNIERQFLMNWKASKDAKKISKKRSSKNEDASNSLISNFETMHHIVPVYYPQVGKPKLVFFSEIQRYPVNGNASPESSREDYTKIIEEMGNLSLKQSESLLTKNDVHEPHLFHNPKEKENLFAENE.

LRR repeat units follow at residues 29-50 (KITH…SLCK), 51-72 (NLSV…NYAT), 73-94 (NLTH…RSLK), 95-116 (KLEK…EGLG), 117-138 (ELRE…LFDP), 147-168 (SLSI…EILE), and 169-190 (NLNQ…EFLL). The LRRCT domain occupies 204-242 (NPVCLKPKYRDRLILVSKSLEFLDGKEIKNIERQFLMNW).

As to quaternary structure, interacts with PPP1CC isoform gamma-2; the interaction is direct. Interacts with actin, dynein, KIF5B, KIFC1 and tubulin. Associates with microtubules. In terms of processing, phosphorylated; in the testis.

It localises to the cytoplasm. The protein localises to the cytoskeleton. Its subcellular location is the microtubule organizing center. The protein resides in the centrosome. Functionally, regulates phosphatase activity of protein phosphatase 1 (PP1) complexes in the testis. The protein is Protein phosphatase 1 regulatory subunit 42 (PPP1R42) of Macaca fascicularis (Crab-eating macaque).